The chain runs to 361 residues: Probable cytosolic iron-sulfur protein assembly protein 1 (361 aa).

WD repeat units lie at residues 10–49 (AHSDKAWSVSAHKTVPLLATASTDKTSKIYKLSVKQNFPQ), 56–105 (THKR…TEIL), 120–160 (GHEN…EEFE), 167–206 (DHQHDIKHVVWHPHQNLLASSSYDDTIRLYKQDLDDDDWS), 213–265 (GHEG…SIKH), 280–319 (VHQYPIYSVAWSAQSGKIATVGSDGKIVIYIEGDDNSWSI), and 327–361 (HGVHEINSIIWALLDDQSEVLVTAGDDGCVNIWKP).

Belongs to the WD repeat CIA1 family. Interacts with NAR1.

It localises to the cytoplasm. Its subcellular location is the nucleus. Functionally, essential component of the cytosolic iron-sulfur (Fe/S) protein assembly machinery. Required for the maturation of extramitochondrial Fe/S proteins. The protein is Probable cytosolic iron-sulfur protein assembly protein 1 of Scheffersomyces stipitis (strain ATCC 58785 / CBS 6054 / NBRC 10063 / NRRL Y-11545) (Yeast).